A 94-amino-acid polypeptide reads, in one-letter code: Probable FAD-linked sulfhydryl oxidase FPV093 (94 aa).

In terms of domain architecture, ERV/ALR sulfhydryl oxidase spans 1 to 94 (MDPRYWGSSF…IDIKKVKKLI (94 aa)). Cys41 and Cys44 are oxidised to a cystine.

The protein belongs to the poxviruses E10 family. Requires FAD as cofactor.

It carries out the reaction 2 R'C(R)SH + O2 = R'C(R)S-S(R)CR' + H2O2. In terms of biological role, FAD-dependent sulfhydryl oxidase that catalyzes disulfide bond formation. The polypeptide is Probable FAD-linked sulfhydryl oxidase FPV093 (Fowlpox virus (strain NVSL) (FPV)).